A 529-amino-acid polypeptide reads, in one-letter code: MPPKVSASNATFKNREKPQEVRKANIIAARAVADAIRTSLGPKGMDKMIKTARGEILISNDGHTILKQMAILHPVAKMLVEVSAAQDSEAGDGTTSVVILTGALLGAAEKLLAKGIHPTIIAESFQRAGQRAVEVLLGMSKRISLQDRAELVRAASTSLSSKIVSQYSTFLAPLAVDCVLSLTNEASTNVDLNDIRLVKKVGGTIDDTEMVDGVVLTQNIVKSAGGPVRMEKAKIGLIQFQISPPKPDTENNIVVNDYRQMDKILKEERAYLLKICKKIKKAKCNVLLIQKSILRDAVNELALHFLSKLNIVVIKDVERDEIEFLSKSLGCKPISDVELFTEDRLGSADLVEEIDSDGTKIVKITGIKTGNAKPTVSCIVRGANNVVLDETERSLHDALCVIRCLVKERALIAGGGAPEIEVSRTIMRESRAMQGVEAFVWQEFAEALEVIPTTLAENAGLNSIKVVTELRSRHESGETNAGISVRRSGTTNTYDEHILQPVLVSTSAITLAAECVKSILRIDDITFSR.

It belongs to the TCP-1 chaperonin family. In terms of assembly, heterooligomeric complex of about 850 to 900 kDa that forms two stacked rings, 12 to 16 nm in diameter.

The protein resides in the cytoplasm. Functionally, molecular chaperone; assists the folding of proteins upon ATP hydrolysis. Known to play a role, in vitro, in the folding of actin and tubulin. The polypeptide is T-complex protein 1 subunit delta (CCT4) (Eremothecium gossypii (strain ATCC 10895 / CBS 109.51 / FGSC 9923 / NRRL Y-1056) (Yeast)).